A 218-amino-acid chain; its full sequence is Elongation factor Ts (218 aa).

Residues 82–85 (TDFV) are involved in Mg(2+) ion dislocation from EF-Tu.

Belongs to the EF-Ts family.

The protein resides in the cytoplasm. Associates with the EF-Tu.GDP complex and induces the exchange of GDP to GTP. It remains bound to the aminoacyl-tRNA.EF-Tu.GTP complex up to the GTP hydrolysis stage on the ribosome. This chain is Elongation factor Ts (tsf), found in Synechocystis sp. (strain ATCC 27184 / PCC 6803 / Kazusa).